Reading from the N-terminus, the 134-residue chain is Small ribosomal subunit protein uS8c (134 aa).

It belongs to the universal ribosomal protein uS8 family. As to quaternary structure, part of the 30S ribosomal subunit.

It is found in the plastid. Its subcellular location is the chloroplast. Functionally, one of the primary rRNA binding proteins, it binds directly to 16S rRNA central domain where it helps coordinate assembly of the platform of the 30S subunit. This chain is Small ribosomal subunit protein uS8c (rps8), found in Lactuca sativa (Garden lettuce).